The sequence spans 318 residues: Acetyl-coenzyme A carboxylase carboxyl transferase subunit alpha (318 aa).

A CoA carboxyltransferase C-terminal domain is found at 32–293 (NLSDELERLR…KERLVSQLDR (262 aa)).

The protein belongs to the AccA family. In terms of assembly, acetyl-CoA carboxylase is a heterohexamer composed of biotin carboxyl carrier protein (AccB), biotin carboxylase (AccC) and two subunits each of ACCase subunit alpha (AccA) and ACCase subunit beta (AccD).

Its subcellular location is the cytoplasm. It carries out the reaction N(6)-carboxybiotinyl-L-lysyl-[protein] + acetyl-CoA = N(6)-biotinyl-L-lysyl-[protein] + malonyl-CoA. It functions in the pathway lipid metabolism; malonyl-CoA biosynthesis; malonyl-CoA from acetyl-CoA: step 1/1. Component of the acetyl coenzyme A carboxylase (ACC) complex. First, biotin carboxylase catalyzes the carboxylation of biotin on its carrier protein (BCCP) and then the CO(2) group is transferred by the carboxyltransferase to acetyl-CoA to form malonyl-CoA. The polypeptide is Acetyl-coenzyme A carboxylase carboxyl transferase subunit alpha (Saccharophagus degradans (strain 2-40 / ATCC 43961 / DSM 17024)).